A 376-amino-acid chain; its full sequence is Polygalacturonase (376 aa).

An N-terminal signal peptide occupies residues 1–20; that stretch reads MASSLKLGLIALLGATAVNA. A disulfide bridge links C39 with C57. A PbH1 1 repeat occupies 170–208; sequence AKELTLSGITVDTADGDSNGGHNTDAFDVGSSNGVYITS. Catalysis depends on D215, which acts as the Proton donor. The cysteines at positions 217 and 233 are disulfide-linked. 4 PbH1 repeats span residues 223–243, 252–273, 281–303, and 315–360; these read GTNV…SIGS, VDGV…RIKT, VQGV…VIEQ, and TSGV…SITG. Residue H237 is part of the active site. Cystine bridges form between C343–C348 and C367–C376.

The protein belongs to the glycosyl hydrolase 28 family.

Its subcellular location is the secreted. It catalyses the reaction (1,4-alpha-D-galacturonosyl)n+m + H2O = (1,4-alpha-D-galacturonosyl)n + (1,4-alpha-D-galacturonosyl)m.. In Penicillium griseoroseum, this protein is Polygalacturonase (PGG1).